Reading from the N-terminus, the 364-residue chain is DNA replication and repair protein RecF (364 aa).

30-37 contacts ATP; the sequence is GNNGMGKT.

Belongs to the RecF family.

It localises to the cytoplasm. Functionally, the RecF protein is involved in DNA metabolism; it is required for DNA replication and normal SOS inducibility. RecF binds preferentially to single-stranded, linear DNA. It also seems to bind ATP. This is DNA replication and repair protein RecF from Porphyromonas gingivalis (strain ATCC BAA-308 / W83).